The chain runs to 270 residues: Glutamate racemase (270 aa).

Residues 10–11 (DS) and 42–43 (YG) contribute to the substrate site. The Proton donor/acceptor role is filled by cysteine 73. 74 to 75 (NT) is a binding site for substrate. Cysteine 184 (proton donor/acceptor) is an active-site residue. Position 185 to 186 (185 to 186 (TH)) interacts with substrate.

The protein belongs to the aspartate/glutamate racemases family.

It carries out the reaction L-glutamate = D-glutamate. The protein operates within cell wall biogenesis; peptidoglycan biosynthesis. In terms of biological role, provides the (R)-glutamate required for cell wall biosynthesis. The polypeptide is Glutamate racemase (Geobacter metallireducens (strain ATCC 53774 / DSM 7210 / GS-15)).